Consider the following 464-residue polypeptide: Argininosuccinate lyase (464 aa).

It belongs to the lyase 1 family. Argininosuccinate lyase subfamily.

The protein localises to the cytoplasm. It carries out the reaction 2-(N(omega)-L-arginino)succinate = fumarate + L-arginine. The protein operates within amino-acid biosynthesis; L-arginine biosynthesis; L-arginine from L-ornithine and carbamoyl phosphate: step 3/3. The chain is Argininosuccinate lyase from Stutzerimonas stutzeri (strain A1501) (Pseudomonas stutzeri).